The chain runs to 393 residues: NAD(P)H-quinone oxidoreductase subunit H, chloroplastic (393 aa).

The protein belongs to the complex I 49 kDa subunit family. NDH is composed of at least 16 different subunits, 5 of which are encoded in the nucleus.

The protein localises to the plastid. It is found in the chloroplast thylakoid membrane. It carries out the reaction a plastoquinone + NADH + (n+1) H(+)(in) = a plastoquinol + NAD(+) + n H(+)(out). It catalyses the reaction a plastoquinone + NADPH + (n+1) H(+)(in) = a plastoquinol + NADP(+) + n H(+)(out). NDH shuttles electrons from NAD(P)H:plastoquinone, via FMN and iron-sulfur (Fe-S) centers, to quinones in the photosynthetic chain and possibly in a chloroplast respiratory chain. The immediate electron acceptor for the enzyme in this species is believed to be plastoquinone. Couples the redox reaction to proton translocation, and thus conserves the redox energy in a proton gradient. The polypeptide is NAD(P)H-quinone oxidoreductase subunit H, chloroplastic (Cicer arietinum (Chickpea)).